Here is a 211-residue protein sequence, read N- to C-terminus: MIERTFVGENVSETLIDEYFKTKLVRAGYSHIDLKKTPIGTRITVFAEKPGFVIGRKGKMVKELTETLSTEYAVNNPQIEVKQVESPDLDPAIVGHKIASSLERGMHFRKTAHSAIRRVMGSGAKGVSIIVSGKLSGERSRTEKFMDGYMKHCGEPAEALVNKSHQLAKLKLGVVGVTVKIMKPDVSLPDEITILSGEIKEVTEYSEASQE.

Positions 16 to 85 (IDEYFKTKLV…NPQIEVKQVE (70 aa)) constitute a KH type-2 domain.

This sequence belongs to the universal ribosomal protein uS3 family. In terms of assembly, part of the 30S ribosomal subunit.

Functionally, binds the lower part of the 30S subunit head. The protein is Small ribosomal subunit protein uS3 of Methanococcus maripaludis (strain C7 / ATCC BAA-1331).